We begin with the raw amino-acid sequence, 100 residues long: Coiled-coil domain-containing protein 167 (100 aa).

Residues 14-81 (VASEIDRVEE…VLRGENRRNM (68 aa)) adopt a coiled-coil conformation. Residues 82 to 99 (MLSVALLAISALFYYTFI) form a helical membrane-spanning segment.

It localises to the membrane. The polypeptide is Coiled-coil domain-containing protein 167 (ccdc167) (Danio rerio (Zebrafish)).